A 254-amino-acid chain; its full sequence is NAD-dependent protein deacetylase 1 (254 aa).

Residues Ala-5–Asn-254 enclose the Deacetylase sirtuin-type domain. 8 residues coordinate NAD(+): Ala-31, Thr-35, Phe-42, Arg-43, Gln-108, Ile-110, Asp-111, and His-128. Phe-42 is a binding site for nicotinamide. Nicotinamide-binding residues include Ile-110 and Asp-111. Residue His-128 is the Proton acceptor of the active site. Zn(2+) contacts are provided by Cys-136, Cys-139, Cys-160, and Cys-163. NAD(+) is bound by residues Ser-201, Ser-202, Asn-226, Asp-243, and Ile-244.

Belongs to the sirtuin family. Class U subfamily. Zn(2+) is required as a cofactor.

Its subcellular location is the cytoplasm. The enzyme catalyses N(6)-acetyl-L-lysyl-[protein] + NAD(+) + H2O = 2''-O-acetyl-ADP-D-ribose + nicotinamide + L-lysyl-[protein]. Its function is as follows. NAD-dependent protein deacetylase which modulates the activities of several enzymes which are inactive in their acetylated form. In Bradyrhizobium diazoefficiens (strain JCM 10833 / BCRC 13528 / IAM 13628 / NBRC 14792 / USDA 110), this protein is NAD-dependent protein deacetylase 1.